A 228-amino-acid chain; its full sequence is DNA mismatch repair protein MutH (228 aa).

It belongs to the MutH family.

It localises to the cytoplasm. Its function is as follows. Sequence-specific endonuclease that cleaves unmethylated GATC sequences. It is involved in DNA mismatch repair. In Serratia proteamaculans (strain 568), this protein is DNA mismatch repair protein MutH.